A 364-amino-acid polypeptide reads, in one-letter code: sn-glycerol-3-phosphate import ATP-binding protein UgpC (364 aa).

In terms of domain architecture, ABC transporter spans 4–235; that stretch reads VVLRNVRKTY…PATTFVASFI (232 aa). Residue 37–44 participates in ATP binding; sequence GPSGCGKS.

The protein belongs to the ABC transporter superfamily. sn-glycerol-3-phosphate importer (TC 3.A.1.1.3) family. The complex is composed of two ATP-binding proteins (UgpC), two transmembrane proteins (UgpA and UgpE) and a solute-binding protein (UgpB).

It is found in the cell inner membrane. It carries out the reaction sn-glycerol 3-phosphate(out) + ATP + H2O = sn-glycerol 3-phosphate(in) + ADP + phosphate + H(+). Part of the ABC transporter complex UgpBAEC involved in sn-glycerol-3-phosphate (G3P) import. Responsible for energy coupling to the transport system. In Rhodopseudomonas palustris (strain HaA2), this protein is sn-glycerol-3-phosphate import ATP-binding protein UgpC.